A 125-amino-acid chain; its full sequence is Glycine cleavage system H protein (125 aa).

A Lipoyl-binding domain is found at 22–104; sequence SYVIGITDFA…YDTGWILKLE (83 aa). Position 63 is an N6-lipoyllysine (K63).

The protein belongs to the GcvH family. In terms of assembly, the glycine cleavage system is composed of four proteins: P, T, L and H. (R)-lipoate is required as a cofactor.

In terms of biological role, the glycine cleavage system catalyzes the degradation of glycine. The H protein shuttles the methylamine group of glycine from the P protein to the T protein. Its function is as follows. Is also involved in protein lipoylation via its role as an octanoyl/lipoyl carrier protein intermediate. This chain is Glycine cleavage system H protein, found in Listeria monocytogenes serotype 4b (strain CLIP80459).